A 65-amino-acid chain; its full sequence is Large ribosomal subunit protein bL35 (65 aa).

This sequence belongs to the bacterial ribosomal protein bL35 family.

The chain is Large ribosomal subunit protein bL35 from Chlorobium phaeovibrioides (strain DSM 265 / 1930) (Prosthecochloris vibrioformis (strain DSM 265)).